The sequence spans 499 residues: Putative DUF21 domain-containing protein At1g03270 (499 aa).

The Extracellular portion of the chain corresponds to 1–32 (MVVLSTLALVRAAYSLNSFVFEAEDIRFGSPW). The 183-residue stretch at 29–211 (GSPWWFVVVG…GKGGELTHEE (183 aa)) folds into the CNNM transmembrane domain. The helical transmembrane segment at 33 to 53 (WFVVVGVACFLVLFAGIMSGL) threads the bilayer. Residues 54-91 (TLGLMSLGLVELEILQQSGSSAEKKQAAAILPVVKKQH) lie on the Cytoplasmic side of the membrane. A helical membrane pass occupies residues 92–112 (QLLVTLLLCNAAAMEALPICL). At 113–114 (DK) the chain is on the extracellular side. Residues 115–135 (IFHPFVAVLLSVTFVLAFGEI) form a helical membrane-spanning segment. Topologically, residues 136-145 (IPQAICSRYG) are cytoplasmic. A helical transmembrane segment spans residues 146–166 (LAVGANFLWLVRILMIICYPI). At 167 to 499 (AYPIGKVLDA…TEPLLAESDR (333 aa)) the chain is on the extracellular side. A glycan (N-linked (GlcNAc...) asparagine) is linked at N181. 3 CBS domains span residues 230 to 291 (MTPI…EAPV), 295 to 359 (SIRK…SNLT), and 365 to 431 (HESH…IVDE). N-linked (GlcNAc...) asparagine glycans are attached at residues N357, N391, and N484.

It localises to the membrane. The sequence is that of Putative DUF21 domain-containing protein At1g03270 (CBSDUF4) from Arabidopsis thaliana (Mouse-ear cress).